The following is a 211-amino-acid chain: Transcription factor bHLH150 (211 aa).

Positions 1 to 15 are enriched in polar residues; the sequence is MSSEQGNGSNPSTSP. Residues 1 to 23 form a disordered region; the sequence is MSSEQGNGSNPSTSPEVEGTKTI. One can recognise a bHLH domain in the interval 135-184; that stretch reads AIRGSGGSGRRRKLSAVGNRVRVLGGLVPGCRRTALPELLDETADYIAAL.

In terms of assembly, homodimer. Interacts with PRE3 and ASK7. Post-translationally, phosphorylated by ASK7.

Its subcellular location is the nucleus. Functionally, atypical bHLH transcription factor probably unable to bind DNA. Negatively regulates brassinosteroid signaling. The protein is Transcription factor bHLH150 (BHLH150) of Arabidopsis thaliana (Mouse-ear cress).